We begin with the raw amino-acid sequence, 505 residues long: Maturase K (505 aa).

The protein belongs to the intron maturase 2 family. MatK subfamily.

It localises to the plastid. Its subcellular location is the chloroplast. Functionally, usually encoded in the trnK tRNA gene intron. Probably assists in splicing its own and other chloroplast group II introns. The protein is Maturase K of Morus alba (White mulberry).